Consider the following 1545-residue polypeptide: Immunoglobulin A1 protease autotransporter (1545 aa).

A signal peptide spans 1–25 (MLNKKFKLNFIALTVAYALTPYTEA). The Peptidase S6 domain occupies 26-336 (ALVRDDVDYQ…NIYKPEFAEK (311 aa)). Ser-292 is a catalytic residue. Over residues 995 to 1019 (TVDTTNITTPNNIQADVPSVPSNNE) the composition is skewed to polar residues. Residues 995-1246 (TVDTTNITTP…NVEPATTSSN (252 aa)) are disordered. Residues 1036-1046 (TPSETTETVAE) are compositionally biased toward low complexity. The span at 1048–1060 (SKQESKTVEKNEQ) shows a compositional bias: basic and acidic residues. Residues 1080–1094 (VKANTQTNEVAQSGS) are compositionally biased toward polar residues. A compositionally biased stretch (basic and acidic residues) spans 1095-1125 (ETKETQTTETKETATVEKEEKAKVETEKTQE). Composition is skewed to polar residues over residues 1129–1145 (VTSQ…TVQP) and 1161–1222 (EPQS…SSNK). The 253-residue stretch at 1293–1545 (NNEGQYNVWV…TAELKLSFSF (253 aa)) folds into the Autotransporter domain.

Its subcellular location is the periplasm. The protein localises to the secreted. The protein resides in the cell surface. It is found in the cell outer membrane. It catalyses the reaction Cleavage of immunoglobulin A molecules at certain Pro-|-Xaa bonds in the hinge region. No small molecule substrates are known.. In terms of biological role, virulence factor; cleaves host immunoglobulin A producing intact Fc and Fab fragments. This chain is Immunoglobulin A1 protease autotransporter (iga), found in Haemophilus influenzae.